Here is a 317-residue protein sequence, read N- to C-terminus: tRNA pseudouridine synthase B (317 aa).

D47 functions as the Nucleophile in the catalytic mechanism.

The protein belongs to the pseudouridine synthase TruB family. Type 1 subfamily.

The catalysed reaction is uridine(55) in tRNA = pseudouridine(55) in tRNA. Responsible for synthesis of pseudouridine from uracil-55 in the psi GC loop of transfer RNAs. The chain is tRNA pseudouridine synthase B from Shewanella frigidimarina (strain NCIMB 400).